A 151-amino-acid polypeptide reads, in one-letter code: 3-hydroxyacyl-[acyl-carrier-protein] dehydratase FabZ (151 aa).

His-54 is a catalytic residue.

This sequence belongs to the thioester dehydratase family. FabZ subfamily.

It localises to the cytoplasm. The enzyme catalyses a (3R)-hydroxyacyl-[ACP] = a (2E)-enoyl-[ACP] + H2O. Functionally, involved in unsaturated fatty acids biosynthesis. Catalyzes the dehydration of short chain beta-hydroxyacyl-ACPs and long chain saturated and unsaturated beta-hydroxyacyl-ACPs. In Sodalis glossinidius (strain morsitans), this protein is 3-hydroxyacyl-[acyl-carrier-protein] dehydratase FabZ.